The chain runs to 150 residues: Deoxyuridine 5'-triphosphate nucleotidohydrolase (150 aa).

Substrate contacts are provided by residues 69 to 71, Asn82, 86 to 88, and Met96; these read RSG and LID.

Belongs to the dUTPase family. Requires Mg(2+) as cofactor.

It catalyses the reaction dUTP + H2O = dUMP + diphosphate + H(+). The protein operates within pyrimidine metabolism; dUMP biosynthesis; dUMP from dCTP (dUTP route): step 2/2. This enzyme is involved in nucleotide metabolism: it produces dUMP, the immediate precursor of thymidine nucleotides and it decreases the intracellular concentration of dUTP so that uracil cannot be incorporated into DNA. The polypeptide is Deoxyuridine 5'-triphosphate nucleotidohydrolase (Acinetobacter baumannii (strain AB307-0294)).